Consider the following 284-residue polypeptide: Nucleotide-binding protein Sputcn32_0712 (284 aa).

8–15 (GRSGSGKS) provides a ligand contact to ATP. 56–59 (DVRN) serves as a coordination point for GTP.

Belongs to the RapZ-like family.

In terms of biological role, displays ATPase and GTPase activities. In Shewanella putrefaciens (strain CN-32 / ATCC BAA-453), this protein is Nucleotide-binding protein Sputcn32_0712.